We begin with the raw amino-acid sequence, 565 residues long: NAD-dependent malic enzyme (565 aa).

Tyr104 acts as the Proton donor in catalysis. Position 157 (Arg157) interacts with NAD(+). Lys175 acts as the Proton acceptor in catalysis. A divalent metal cation-binding residues include Glu246, Asp247, and Asp270. NAD(+)-binding residues include Asp270 and Asn418.

The protein belongs to the malic enzymes family. As to quaternary structure, homotetramer. Mg(2+) is required as a cofactor. Mn(2+) serves as cofactor.

It carries out the reaction (S)-malate + NAD(+) = pyruvate + CO2 + NADH. The enzyme catalyses oxaloacetate + H(+) = pyruvate + CO2. The sequence is that of NAD-dependent malic enzyme from Escherichia coli O127:H6 (strain E2348/69 / EPEC).